Here is a 292-residue protein sequence, read N- to C-terminus: Acetyl-coenzyme A carboxylase carboxyl transferase subunit beta (292 aa).

A CoA carboxyltransferase N-terminal domain is found at 29-292 (LWSKCPECGQ…HGCESRVASS (264 aa)). Zn(2+) contacts are provided by cysteine 33, cysteine 36, cysteine 52, and cysteine 55. The C4-type zinc-finger motif lies at 33–55 (CPECGQVVYRKDLLSNASVCGNC).

It belongs to the AccD/PCCB family. As to quaternary structure, acetyl-CoA carboxylase is a heterohexamer composed of biotin carboxyl carrier protein (AccB), biotin carboxylase (AccC) and two subunits each of ACCase subunit alpha (AccA) and ACCase subunit beta (AccD). The cofactor is Zn(2+).

The protein resides in the cytoplasm. The catalysed reaction is N(6)-carboxybiotinyl-L-lysyl-[protein] + acetyl-CoA = N(6)-biotinyl-L-lysyl-[protein] + malonyl-CoA. The protein operates within lipid metabolism; malonyl-CoA biosynthesis; malonyl-CoA from acetyl-CoA: step 1/1. Its function is as follows. Component of the acetyl coenzyme A carboxylase (ACC) complex. Biotin carboxylase (BC) catalyzes the carboxylation of biotin on its carrier protein (BCCP) and then the CO(2) group is transferred by the transcarboxylase to acetyl-CoA to form malonyl-CoA. This chain is Acetyl-coenzyme A carboxylase carboxyl transferase subunit beta, found in Synechococcus sp. (strain CC9311).